The following is a 110-amino-acid chain: Thiosulfate sulfurtransferase GlpE (110 aa).

Positions 17–105 (KKEGAVVVDI…WRATYPAETA (89 aa)) constitute a Rhodanese domain. Residue Cys65 is the Cysteine persulfide intermediate of the active site.

It belongs to the GlpE family.

Its subcellular location is the cytoplasm. It carries out the reaction thiosulfate + hydrogen cyanide = thiocyanate + sulfite + 2 H(+). The enzyme catalyses thiosulfate + [thioredoxin]-dithiol = [thioredoxin]-disulfide + hydrogen sulfide + sulfite + 2 H(+). Transferase that catalyzes the transfer of sulfur from thiosulfate to thiophilic acceptors such as cyanide or dithiols. May function in a CysM-independent thiosulfate assimilation pathway by catalyzing the conversion of thiosulfate to sulfite, which can then be used for L-cysteine biosynthesis. The sequence is that of Thiosulfate sulfurtransferase GlpE from Pseudomonas putida (strain ATCC 700007 / DSM 6899 / JCM 31910 / BCRC 17059 / LMG 24140 / F1).